Reading from the N-terminus, the 85-residue chain is Turmerin (85 aa).

In terms of processing, the N-terminus is blocked.

Its function is as follows. Inhibition of trypsin. Has anticarcinogenic activity, prevents transformation of DMBA-treated JB6 cells. Has antipromoter activity, prevents promotion by tetradecanoyl phorbal acetate (TPA) in JB6 cells. Prevents tertiary butyl hydroperoxide-induced mutagenesis. Protects AT base pairs and shows antimutagenesis activity in TA102 and TA104 S.typhimurium mutagenesis tests. Inhibits paw edema formation induced by phospholipase A2 in Swiss Wistar mice. Prevents the release of arachidonate, the parent compound for the synthesis of prostaglandins and prostacyclins. Has antimalarial activity, kills P.falciparum. Has antivenom activity, nullifies the lethal effects of N.naja venom and inhibits phospholipase A2 present in N.naja venom. Has antifungal activity, inhibits cilia formation by A.niger. Is not toxic or allergenic. The protein is Turmerin of Curcuma longa (Turmeric).